The chain runs to 83 residues: Cytochrome b559 subunit alpha (83 aa).

A helical membrane pass occupies residues 21 to 35; that stretch reads VIHSITIPSLFIAGW. A heme-binding site is contributed by His23.

This sequence belongs to the PsbE/PsbF family. As to quaternary structure, heterodimer of an alpha subunit and a beta subunit. PSII is composed of 1 copy each of membrane proteins PsbA, PsbB, PsbC, PsbD, PsbE, PsbF, PsbH, PsbI, PsbJ, PsbK, PsbL, PsbM, PsbT, PsbX, PsbY, PsbZ, Psb30/Ycf12, at least 3 peripheral proteins of the oxygen-evolving complex and a large number of cofactors. It forms dimeric complexes. Heme b serves as cofactor.

It is found in the plastid. The protein resides in the chloroplast thylakoid membrane. Its function is as follows. This b-type cytochrome is tightly associated with the reaction center of photosystem II (PSII). PSII is a light-driven water:plastoquinone oxidoreductase that uses light energy to abstract electrons from H(2)O, generating O(2) and a proton gradient subsequently used for ATP formation. It consists of a core antenna complex that captures photons, and an electron transfer chain that converts photonic excitation into a charge separation. This Physcomitrium patens (Spreading-leaved earth moss) protein is Cytochrome b559 subunit alpha.